The chain runs to 672 residues: DNA ligase (672 aa).

Residues 37 to 41, 86 to 87, and Glu-115 contribute to the NAD(+) site; these read DAEYD and SL. The N6-AMP-lysine intermediate role is filled by Lys-117. NAD(+) contacts are provided by Arg-138, Glu-172, Lys-288, and Lys-312. Positions 406, 409, 424, and 429 each coordinate Zn(2+). Positions 590 to 672 constitute a BRCT domain; sequence DISSTFAGKT…LQEIQQSKQV (83 aa).

It belongs to the NAD-dependent DNA ligase family. LigA subfamily. Mg(2+) is required as a cofactor. The cofactor is Mn(2+).

It carries out the reaction NAD(+) + (deoxyribonucleotide)n-3'-hydroxyl + 5'-phospho-(deoxyribonucleotide)m = (deoxyribonucleotide)n+m + AMP + beta-nicotinamide D-nucleotide.. In terms of biological role, DNA ligase that catalyzes the formation of phosphodiester linkages between 5'-phosphoryl and 3'-hydroxyl groups in double-stranded DNA using NAD as a coenzyme and as the energy source for the reaction. It is essential for DNA replication and repair of damaged DNA. This chain is DNA ligase, found in Anoxybacillus flavithermus (strain DSM 21510 / WK1).